The sequence spans 323 residues: ADP/ATP translocase 4 (323 aa).

The Mitochondrial intermembrane segment spans residues 1 to 23 (MQREPPKRKQEKKVEKGLFDATS). A Solcar 1 repeat occupies 22–114 (TSFGKDLLAG…FAFKDKYKQL (93 aa)). Residues 24 to 53 (FGKDLLAGGVAAAVSKTTVAPIERVKLLLQ) traverse the membrane as a helical segment. Over 54 to 90 (VQASSKQISPEAQYKGIVDCLVRIPREQGFLSYWRGN) the chain is Mitochondrial matrix. Residues 91–115 (LANVIRYFPTQALNFAFKDKYKQLF) form a helical membrane-spanning segment. ADP is bound by residues Arg-96 and Lys-108. At 116-125 (MSGVNKEKQF) the chain is on the mitochondrial intermembrane side. The chain crosses the membrane as a helical span at residues 126–146 (WRWFLANLASGGAAGATSLCV). Solcar repeat units follow at residues 127–217 (RWFL…VKGL) and 224–311 (THFL…IKDL). Over 147–194 (VYPLDFARTRLGADIGKGPEERQFKGLGDCIMKIAKSDGIVGLYQGFG) the chain is Mitochondrial matrix. A helical membrane pass occupies residues 195–215 (VSVQGIIVYRASYFGAYDTVK). Over 216 to 226 (GLLPKPKETHF) the chain is Mitochondrial intermembrane. The helical transmembrane segment at 227 to 247 (LVSFFIAQVVTTCSGILSYPF) threads the bilayer. Topologically, residues 248-287 (DTVRRRMMMQSGEAERQYKGTLDCFMKIYQQEGIGAFFRG) are mitochondrial matrix. Arg-251 contacts ADP. The interval 251 to 256 (RRRMMM) is important for transport activity. The Nucleotide carrier signature motif signature appears at 251–256 (RRRMMM). Residues 288-305 (AFSNILRGTGGALVLVLY) traverse the membrane as a helical segment. The Mitochondrial intermembrane segment spans residues 306–323 (DKIKDLLNIDIGGSSSGD).

It belongs to the mitochondrial carrier (TC 2.A.29) family. As to quaternary structure, monomer.

It localises to the mitochondrion inner membrane. Its subcellular location is the membrane. The protein resides in the cell projection. It is found in the cilium. The protein localises to the flagellum membrane. The catalysed reaction is ADP(in) + ATP(out) = ADP(out) + ATP(in). The enzyme catalyses dATP(out) + ADP(in) = dATP(in) + ADP(out). It catalyses the reaction dADP(in) + ADP(out) = dADP(out) + ADP(in). It carries out the reaction H(+)(in) = H(+)(out). The matrix-open state (m-state) is inhibited by the membrane-permeable bongkrekic acid (BKA). The cytoplasmic-open state (c-state) is inhibited by the membrane-impermeable toxic inhibitor carboxyatractyloside (CATR). Proton transporter activity is inhibited by ADP:ATP antiporter activity. In terms of biological role, ADP:ATP antiporter that mediates import of ADP into the mitochondrial matrix for ATP synthesis, and export of ATP out to fuel the cell. Cycles between the cytoplasmic-open state (c-state) and the matrix-open state (m-state): operates by the alternating access mechanism with a single substrate-binding site intermittently exposed to either the cytosolic (c-state) or matrix (m-state) side of the inner mitochondrial membrane. Specifically required during spermatogenesis, probably to mediate ADP:ATP exchange in spermatocytes. Large ATP supplies from mitochondria may be critical for normal progression of spermatogenesis during early stages of meiotic prophase I, including DNA double-strand break repair and chromosomal synapsis. In addition to its ADP:ATP antiporter activity, also involved in mitochondrial uncoupling and mitochondrial permeability transition pore (mPTP) activity. Plays a role in mitochondrial uncoupling by acting as a proton transporter: proton transport uncouples the proton flows via the electron transport chain and ATP synthase to reduce the efficiency of ATP production and cause mitochondrial thermogenesis. Proton transporter activity is inhibited by ADP:ATP antiporter activity, suggesting that SLC25A31/ANT4 acts as a master regulator of mitochondrial energy output by maintaining a delicate balance between ATP production (ADP:ATP antiporter activity) and thermogenesis (proton transporter activity). Proton transporter activity requires free fatty acids as cofactor, but does not transport it. Among nucleotides, may also exchange ADP for dATP and dADP. Also plays a key role in mPTP opening, a non-specific pore that enables free passage of the mitochondrial membranes to solutes of up to 1.5 kDa, and which contributes to cell death. It is however unclear if SLC25A31/ANT4 constitutes a pore-forming component of mPTP or regulates it. The polypeptide is ADP/ATP translocase 4 (Bos taurus (Bovine)).